The chain runs to 371 residues: Opine oxidase subunit B (371 aa).

As to quaternary structure, heterodimer of a subunit A and a subunit B.

It participates in opine metabolism; octopine degradation. Its function is as follows. Oxidative cleavage of octopine into L-arginine and pyruvate. In Rhizobium meliloti (Ensifer meliloti), this protein is Opine oxidase subunit B (ooxB).